A 143-amino-acid chain; its full sequence is Small ribosomal subunit protein eS12 (143 aa).

This sequence belongs to the eukaryotic ribosomal protein eS12 family.

The chain is Small ribosomal subunit protein eS12 (RPS12) from Hordeum vulgare (Barley).